Here is a 198-residue protein sequence, read N- to C-terminus: T-cell surface glycoprotein CD3 epsilon chain (198 aa).

Positions 1 to 21 are cleaved as a signal peptide; it reads MQSGTRWRVLGLCLLSIGVWG. The Extracellular portion of the chain corresponds to 22 to 117; that stretch reads QDGNEEMGSI…RVCENCMEMD (96 aa). In terms of domain architecture, Ig-like spans 37 to 107; it reads QVSISGTTVI…DASHHLYLKA (71 aa). An intrachain disulfide couples Cys-49 to Cys-89. A helical transmembrane segment spans residues 118-138; the sequence is VMAVATIVIVDICITLGLLLL. Residues 139–198 are Cytoplasmic-facing; it reads VYYWSKNRKAKAKPVTRGAGAGGRQRGQNKERPPPVPNPDYEPIRKGQQDLYSGLNQRRI. A disordered region spans residues 152–198; that stretch reads PVTRGAGAGGRQRGQNKERPPPVPNPDYEPIRKGQQDLYSGLNQRRI. Positions 166-183 are NUMB-binding region; sequence QNKERPPPVPNPDYEPIR. Residues 169-196 form the ITAM domain; that stretch reads ERPPPVPNPDYEPIRKGQQDLYSGLNQR. The interval 170–177 is proline-rich sequence; the sequence is RPPPVPNP. A phosphotyrosine mark is found at Tyr-179 and Tyr-190. Residues 188–198 show a composition bias toward polar residues; sequence DLYSGLNQRRI.

As to quaternary structure, the TCR-CD3 complex is composed of a CD3D/CD3E and a CD3G/CD3E heterodimers that preferentially associate with TCRalpha and TCRbeta, respectively, to form TCRalpha/CD3E/CD3G and TCRbeta/CD3G/CD3E trimers. In turn, the hexamer interacts with CD3Z homodimer to form the TCR-CD3 complex. Alternatively, TCRalpha and TCRbeta can be replaced by TCRgamma and TCRdelta. Interacts with CD6. Interacts (via Proline-rich sequence) with NCK1; the interaction is ligand dependent but independent of tyrosine kinase activation. Phosphorylated on Tyr residues after T-cell receptor triggering by LCK in association with CD4/CD8.

It localises to the cell membrane. Its function is as follows. Part of the TCR-CD3 complex present on T-lymphocyte cell surface that plays an essential role in adaptive immune response. When antigen presenting cells (APCs) activate T-cell receptor (TCR), TCR-mediated signals are transmitted across the cell membrane by the CD3 chains CD3D, CD3E, CD3G and CD3Z. All CD3 chains contain immunoreceptor tyrosine-based activation motifs (ITAMs) in their cytoplasmic domain. Upon TCR engagement, these motifs become phosphorylated by Src family protein tyrosine kinases LCK and FYN, resulting in the activation of downstream signaling pathways. In addition of this role of signal transduction in T-cell activation, CD3E plays an essential role in correct T-cell development. Also participates in internalization and cell surface down-regulation of TCR-CD3 complexes via endocytosis sequences present in CD3E cytosolic region. In addition to its role as a TCR coreceptor, it serves as a receptor for ITPRIPL1. Ligand recognition inhibits T-cell activation by promoting interaction with NCK1, which prevents CD3E-ZAP70 interaction and blocks the ERK-NFkB signaling cascade and calcium influx. This chain is T-cell surface glycoprotein CD3 epsilon chain (CD3E), found in Macaca fascicularis (Crab-eating macaque).